The chain runs to 362 residues: tRNA-specific 2-thiouridylase MnmA (362 aa).

Residues 8–15 (AMSGGVDS) and Met35 each bind ATP. Residues 95–97 (NPD) form an interaction with target base in tRNA region. Cys100 serves as the catalytic Nucleophile. The cysteines at positions 100 and 196 are disulfide-linked. Gly124 serves as a coordination point for ATP. The segment at 146 to 148 (KDQ) is interaction with tRNA. Cys196 (cysteine persulfide intermediate) is an active-site residue. The segment at 303–304 (RY) is interaction with tRNA.

The protein belongs to the MnmA/TRMU family.

Its subcellular location is the cytoplasm. It carries out the reaction S-sulfanyl-L-cysteinyl-[protein] + uridine(34) in tRNA + AH2 + ATP = 2-thiouridine(34) in tRNA + L-cysteinyl-[protein] + A + AMP + diphosphate + H(+). In terms of biological role, catalyzes the 2-thiolation of uridine at the wobble position (U34) of tRNA, leading to the formation of s(2)U34. This Chlamydia abortus (strain DSM 27085 / S26/3) (Chlamydophila abortus) protein is tRNA-specific 2-thiouridylase MnmA.